We begin with the raw amino-acid sequence, 878 residues long: MKRRWSNNGGFMRLPEESSSEVTSSSNGLVLPSGVNMSPSSLDSHDYCDQDLWLCGNESGSFGGSNGHGLSQQQQSVITLAMHGCSSTLPAQTTIIPINGNANGNGGSTNGQYVPGATNLGALANGMLNGGFNGMQQQIQNGHGLINSTTPSTPTTPLHLQQNLGGAGGGGIGGMGILHHANGTPNGLIGVVGGGGGVGLGVGGGGVGGLGMQHTPRSDSVNSISSGRDDLSPSSSLNGYSANESCDAKKSKKGPAPRVQEELCLVCGDRASGYHYNALTCEGCKGFFRRSVTKSAVYCCKFGRACEMDMYMRRKCQECRLKKCLAVGMRPECVVPENQCAMKRREKKAQKEKDKMTTSPSSQHGGNGSLASGGGQDFVKKEILDLMTCEPPQHATIPLLPDEILAKCQARNIPSLTYNQLAVIYKLIWYQDGYEQPSEEDLRRIMSQPDENESQTDVSFRHITEITILTVQLIVEFAKGLPAFTKIPQEDQITLLKACSSEVMMLRMARRYDHSSDSIFFANNRSYTRDSYKMAGMADNIEDLLHFCRQMFSMKVDNVEYALLTAIVIFSDRPGLEKAQLVEAIQSYYIDTLRIYILNRHCGDSMSLVFYAKLLSILTELRTLGNQNAEMCFSLKLKNRKLPKFLEEIWDVHAIPPSVQSHLQITQEENERLERAERMRASVGGAITAGIDCDSASTSAAAAAAQHQPQPQPQPQPSSLTQNDSQHQTQPQLQPQLPPQLQGQLQPQLQPQLQTQLQPQIQPQPQLLPVSAPVPASVTAPGSLSAVSTSSEYMGGSAAIGPITPATTSSITAAVTASSTTSAVPMGNGVGVGVGVGGNVSMYANAQTAMALMGVALHSHQEQLIGGVAVKSEHSTTA.

Disordered stretches follow at residues 1-27 (MKRR…SSSN) and 209-254 (GLGM…SKKG). The interval 1–263 (MKRRWSNNGG…GPAPRVQEEL (263 aa)) is modulating. NR C4-type zinc fingers lie at residues 264–284 (CLVC…CEGC) and 300–324 (CKFG…LKKC). The nuclear receptor DNA-binding region spans 264–336 (CLVCGDRASG…VGMRPECVVP (73 aa)). The disordered stretch occupies residues 344-374 (RREKKAQKEKDKMTTSPSSQHGGNGSLASGG). The segment covering 365 to 374 (GGNGSLASGG) has biased composition (gly residues). Positions 419–654 (NQLAVIYKLI…FLEEIWDVHA (236 aa)) constitute an NR LBD domain. Composition is skewed to low complexity over residues 698–709 (TSAAAAAAQHQP) and 728–759 (QTQP…QLQP). Residues 698–759 (TSAAAAAAQH…QPQLQTQLQP (62 aa)) are disordered.

This sequence belongs to the nuclear hormone receptor family. NR1 subfamily. In terms of assembly, heterodimer of USP and ECR. Only the heterodimer is capable of high-affinity binding to ecdysone. Interacts with trr in an ecdysone-dependent manner. Upon ecdysone stimulation, interacts with Nup98. As to expression, isoform B1 predominates over isoform A in larval tissues, imaginal histoblast nests and midgut islands. Isoform A predominates over B1 in imaginal disks, and the larval prothoracic gland.

The protein localises to the nucleus. Receptor for ecdysone. Binds to ecdysone response elements (ECRES) following ecdysone-binding, and recruitment of a complex containing the histone methyltransferase trr, leads to activate transcription of target genes. In Drosophila melanogaster (Fruit fly), this protein is Ecdysone receptor (EcR).